A 435-amino-acid polypeptide reads, in one-letter code: 5-hydroxybenzimidazole synthase (435 aa).

Substrate is bound by residues Met-95, Tyr-124, His-163, Ser-186–Gly-188, Asn-227–Arg-230, and Glu-266. His-270 lines the Zn(2+) pocket. Position 293 (Tyr-293) interacts with substrate. His-334 contributes to the Zn(2+) binding site. The [4Fe-4S] cluster site is built by Cys-410, Cys-413, and Cys-417.

The protein belongs to the ThiC family. 5-hydroxybenzimidazole synthase subfamily. In terms of assembly, homodimer. It depends on [4Fe-4S] cluster as a cofactor.

The catalysed reaction is 5-amino-1-(5-phospho-beta-D-ribosyl)imidazole + AH2 + S-adenosyl-L-methionine = 5-hydroxybenzimidazole + 5'-deoxyadenosine + formate + L-methionine + A + NH4(+) + phosphate + 2 H(+). In terms of biological role, catalyzes the conversion of aminoimidazole ribotide (AIR) to 5-hydroxybenzimidazole (5-HBI) in a radical S-adenosyl-L-methionine (SAM)-dependent reaction. Is thus involved in the anaerobic biosynthesis of the benzimidazole lower axial ligand of the cobamide produced by G.metallireducens. The protein is 5-hydroxybenzimidazole synthase of Geobacter metallireducens (strain ATCC 53774 / DSM 7210 / GS-15).